A 347-amino-acid chain; its full sequence is MDENRKKALAAALTQIEKQFGKGSVMRMGDVGAVRNIEAISTGSLGLDLALGIGGVPKGRVIEIYGPESSGKTTLTLHIIAESQKLGGTAAFVDAEHALDPVYAEKLGVNMTDLLVSQPDTGEQALEITDMLVRSGAVDVVVVDSVAALTPKAEIEGEMGDSHVGLQARLMSQALRKLTGNIKRSNCCVIFINQIRMKIGVMFGSPETTTGGNALKFYASVRLDIRRTGAIKKGDEVIGNETKVKVVKNKVAPPFRQAEFDILYGQGISREGEIIDLGVAEGFIDKSGAWYSYDGNRIGQGKDNVRNFLCENPGIAQAIEARIRDKLLPKGGVEAPAEADVPEPSED.

Position 66 to 73 (66 to 73 (GPESSGKT)) interacts with ATP.

Belongs to the RecA family.

It is found in the cytoplasm. In terms of biological role, can catalyze the hydrolysis of ATP in the presence of single-stranded DNA, the ATP-dependent uptake of single-stranded DNA by duplex DNA, and the ATP-dependent hybridization of homologous single-stranded DNAs. It interacts with LexA causing its activation and leading to its autocatalytic cleavage. In Allochromatium vinosum (Chromatium vinosum), this protein is Protein RecA.